Reading from the N-terminus, the 444-residue chain is Adenylosuccinate synthetase (444 aa).

Residues Gly-13–Lys-19 and Gly-41–Thr-43 each bind GTP. The active-site Proton acceptor is the Asp-14. Mg(2+) is bound by residues Asp-14 and Gly-41. IMP-binding positions include Asp-14–Lys-17, Asn-39–His-42, Thr-129, Arg-143, Gln-224, Thr-239, and Arg-303. The active-site Proton donor is the His-42. Residue Thr-299–Arg-305 participates in substrate binding. GTP contacts are provided by residues Arg-305, Lys-331–Asp-333, and Ser-413–Gly-415.

Belongs to the adenylosuccinate synthetase family. Homodimer. Mg(2+) is required as a cofactor.

The protein resides in the cytoplasm. The enzyme catalyses IMP + L-aspartate + GTP = N(6)-(1,2-dicarboxyethyl)-AMP + GDP + phosphate + 2 H(+). The protein operates within purine metabolism; AMP biosynthesis via de novo pathway; AMP from IMP: step 1/2. Its function is as follows. Plays an important role in the de novo pathway of purine nucleotide biosynthesis. Catalyzes the first committed step in the biosynthesis of AMP from IMP. The polypeptide is Adenylosuccinate synthetase (Synechocystis sp. (strain ATCC 27184 / PCC 6803 / Kazusa)).